Here is a 559-residue protein sequence, read N- to C-terminus: Large neutral amino acids transporter small subunit 3 (559 aa).

The chain crosses the membrane as a helical span at residues 20–40 (VLENLFFSAVLLGWGSLLIIL). Asn-57 is a glycosylation site (N-linked (GlcNAc...) asparagine). A run of 5 helical transmembrane segments spans residues 78-98 (LGFT…GILM), 105-124 (PVRL…MALA), 131-151 (LSPL…CLTF), 168-188 (MALM…IKLI), and 191-211 (AGVA…LIFL). 2 N-linked (GlcNAc...) asparagine glycosylation sites follow: Asn-212 and Asn-229. Residues Ser-237, Ser-262, and Ser-267 each carry the phosphoserine modification. The next 6 membrane-spanning stretches (helical) occupy residues 304–324 (FLWS…YMAA), 357–377 (SVFG…GYIM), 419–439 (AISA…TCLI), 446–466 (FVTF…CGSL), 485–505 (LISA…VGPL), and 510–530 (FWVN…PSYL).

It belongs to the SLC43A transporter (TC 2.A.1.44) family. Ubiquitously expressed in fetus and adult. Highest expression in adult pancreas, liver, skeletal muscle. In fetus, highest expression in liver and lower levels in kidney, and lung. Exclusively expressed in the glomeruli along the glomerular capillary walls.

It localises to the cell membrane. Its subcellular location is the apical cell membrane. It is found in the endoplasmic reticulum membrane. It catalyses the reaction D-leucine(in) = D-leucine(out). The catalysed reaction is L-leucine(in) = L-leucine(out). The enzyme catalyses L-isoleucine(in) = L-isoleucine(out). It carries out the reaction L-methionine(in) = L-methionine(out). It catalyses the reaction L-phenylalanine(in) = L-phenylalanine(out). The catalysed reaction is L-valine(in) = L-valine(out). In terms of biological role, uniport that mediates the transport of neutral amino acids such as L-leucine, L-isoleucine, L-valine, and L-phenylalanine. The transport activity is sodium ions-independent, electroneutral and mediated by a facilitated diffusion. The sequence is that of Large neutral amino acids transporter small subunit 3 from Homo sapiens (Human).